Consider the following 406-residue polypeptide: Sprouty-related, EVH1 domain-containing protein 1 (406 aa).

Residues 3–120 enclose the WH1 domain; that stretch reads GEQEPDDSYA…RGIRRAIEDL (118 aa). Residues 124–154 form a disordered region; sequence LPASCHGESETSEDGPQVNKEDHYSTHNNDH. The segment covering 142–154 has biased composition (basic and acidic residues); that stretch reads NKEDHYSTHNNDH. Residues 195 to 247 enclose the KBD domain; it reads PIRHVSFQDEDEIVRINPRDMIIRRYADYRHPDIFRNDVDREEPEDVTFFTKT. Residues 296 to 404 enclose the SPR domain; that stretch reads SCVYCQERFN…CGCCGGKHKA (109 aa).

Post-translationally, palmitoylated by ZDHHC17/HIP14. Ubiquitinated. In terms of processing, phosphorylated on tyrosine.

The protein resides in the cell membrane. Functionally, tyrosine kinase substrate that inhibits growth-factor-mediated activation of MAP kinase. This is Sprouty-related, EVH1 domain-containing protein 1 (spred1) from Xenopus tropicalis (Western clawed frog).